A 515-amino-acid chain; its full sequence is Elongation factor 1-alpha S (515 aa).

In terms of domain architecture, tr-type G spans 5 to 258 (KTHINLVVIG…DAMKPPKRPT (254 aa)). A G1 region spans residues 14 to 21 (GHVDAGKS). Residue 14 to 21 (GHVDAGKS) participates in GTP binding. N6,N6-dimethyllysine is present on Lys-55. The tract at residues 70–74 (GITID) is G2. Position 79 is an N6,N6,N6-trimethyllysine (Lys-79). Residues 91 to 94 (DAPG) are G3. Residues 91–95 (DAPGH) and 151–154 (NKMD) each bind GTP. The G4 stretch occupies residues 151-154 (NKMD). The disordered stretch occupies residues 187–206 (KKDKGDKKKGDKKEKKDKKD). The segment covering 189–206 (DKGDKKKGDKKEKKDKKD) has biased composition (basic and acidic residues). Residues 222-224 (SGW) form a G5 region. Lys-289 carries the N6-methyllysine modification. At Lys-334 the chain carries N6,N6,N6-trimethyllysine. The tract at residues 396–419 (KRGKQTHDVSDDTEWATKDDAEPR) is disordered. The segment covering 398–419 (GKQTHDVSDDTEWATKDDAEPR) has biased composition (basic and acidic residues). The residue at position 441 (Lys-441) is an N6,N6,N6-trimethyllysine.

Belongs to the TRAFAC class translation factor GTPase superfamily. Classic translation factor GTPase family. EF-Tu/EF-1A subfamily.

The protein resides in the cytoplasm. This protein promotes the GTP-dependent binding of aminoacyl-tRNA to the A-site of ribosomes during protein biosynthesis. The sequence is that of Elongation factor 1-alpha S (TEF-S) from Porphyra purpurea (Red seaweed).